A 725-amino-acid chain; its full sequence is Ribonuclease R (725 aa).

In terms of domain architecture, RNB spans 264–592 (RQDLTDLAFV…IHRLLWMHLF (329 aa)). An S1 motif domain is found at 644–725 (GKTFSGFISA…IQKRAILTLI (82 aa)).

It belongs to the RNR ribonuclease family. RNase R subfamily.

Its subcellular location is the cytoplasm. It catalyses the reaction Exonucleolytic cleavage in the 3'- to 5'-direction to yield nucleoside 5'-phosphates.. 3'-5' exoribonuclease that releases 5'-nucleoside monophosphates and is involved in maturation of structured RNAs. This Mycoplasma genitalium (strain ATCC 33530 / DSM 19775 / NCTC 10195 / G37) (Mycoplasmoides genitalium) protein is Ribonuclease R.